The chain runs to 834 residues: Leucine--tRNA ligase (834 aa).

Residues 40–50 (PYPSGNIHMGH) carry the 'HIGH' region motif. The short motif at 586–590 (KMSKS) is the 'KMSKS' region element. Residue Lys589 coordinates ATP.

It belongs to the class-I aminoacyl-tRNA synthetase family.

The protein localises to the cytoplasm. The enzyme catalyses tRNA(Leu) + L-leucine + ATP = L-leucyl-tRNA(Leu) + AMP + diphosphate. The sequence is that of Leucine--tRNA ligase from Nitratidesulfovibrio vulgaris (strain DSM 19637 / Miyazaki F) (Desulfovibrio vulgaris).